Consider the following 135-residue polypeptide: Small ribosomal subunit protein bS16m (135 aa).

A mitochondrion-targeting transit peptide spans Met1 to Ile34. Thr130 is subject to Phosphothreonine.

Belongs to the bacterial ribosomal protein bS16 family. In terms of assembly, component of the mitochondrial ribosome small subunit (28S) which comprises a 12S rRNA and about 30 distinct proteins.

It localises to the mitochondrion. This is Small ribosomal subunit protein bS16m (MRPS16) from Bos taurus (Bovine).